A 99-amino-acid polypeptide reads, in one-letter code: Goannatyrotoxin-Vere1 (99 aa).

An N-terminal signal peptide occupies residues 1 to 28 (MIASMKPWPLVMVAALCILFCLGTLVDA). A Tyrosine amide modification is found at Y64. Residues 68-99 (SSPETLMSELIFGENSNSDHSSRSRFDDSYMW) constitute a propeptide, C-terminal extension.

Belongs to the NPY family. Expressed by the mandibular venom gland.

It localises to the secreted. Functionally, shows a potent unique triphasic action, rapid biphasic hypertension followed by prolonged hypotension. The sequence is that of Goannatyrotoxin-Vere1 from Varanus eremius (Rusty desert monitor).